A 549-amino-acid polypeptide reads, in one-letter code: MAAKDVKFGNDARVKMLRGVNVLADAVKVTLGPKGRNVVLDKSFGAPTITKDGVSVAREIELEDKFENMGAQMVKEVASKANDAAGDGTTTATVLAQSIITEGLKAVAAGMNPMDLKRGIDKAVIAAVEELKKQSVPCSDFKAIAQVGTISANSDETVGKLIAEAMEKVGKEGVITVEEGTGLQDELDVVEGMQFDRGYLSPYFINKPETGSIELESPFILLADKKISNIREMLPVLEAVAKAGKPLLIIAEDVEGEALATLVVNTMRGIVKVAAVKAPGFGDRRKAMLQDIATLTAGTVISEEIGLELEKATLEDLGQAKRVVINKDTTIIIDGVGDEVAIQGRVTQIRQQIEDATSDYDKEKLQERVAKLAGGVAVIKVGAATEVEMKEKKARVEDALHATRAAVEEGVVAGGGVALIRAAASISVSGLKGDNEDQNVGIKVALRAMESPLRQIVINAGEEASVIANTVKAGEGSYGYNAYTEEYGDMIAMGILDPTKVTRSALQYAASIAGLMITTECMVTDLPKGDAPDLGAGGMGGMGGMGGMM.

ATP contacts are provided by residues 30 to 33 (TLGP), Lys51, 87 to 91 (DGTTT), Gly415, and Asp497.

This sequence belongs to the chaperonin (HSP60) family. In terms of assembly, forms a cylinder of 14 subunits composed of two heptameric rings stacked back-to-back. Interacts with the co-chaperonin GroES.

The protein localises to the cytoplasm. The enzyme catalyses ATP + H2O + a folded polypeptide = ADP + phosphate + an unfolded polypeptide.. Together with its co-chaperonin GroES, plays an essential role in assisting protein folding. The GroEL-GroES system forms a nano-cage that allows encapsulation of the non-native substrate proteins and provides a physical environment optimized to promote and accelerate protein folding. The sequence is that of Chaperonin GroEL from Pectobacterium atrosepticum (strain SCRI 1043 / ATCC BAA-672) (Erwinia carotovora subsp. atroseptica).